Here is a 249-residue protein sequence, read N- to C-terminus: Probable transcriptional regulatory protein LBL_2537 (249 aa).

This sequence belongs to the TACO1 family.

It localises to the cytoplasm. The chain is Probable transcriptional regulatory protein LBL_2537 from Leptospira borgpetersenii serovar Hardjo-bovis (strain L550).